We begin with the raw amino-acid sequence, 1798 residues long: DNA polymerase II large subunit (1798 aa).

The disordered stretch occupies residues 286 to 309; that stretch reads EKGKSSEENKDESKAEDTGTESVA. A DOD-type homing endonuclease domain is found at 1184–1319; the sequence is VVGYYLAEGY…ETLLLAKFGI (136 aa). The tract at residues 1699–1798 is disordered; that stretch reads TGHSNGKNGY…GISLDEFFGS (100 aa). Residues 1714-1731 show a composition bias toward low complexity; sequence GKNGKASKKSGSLASKLS. The span at 1733–1753 shows a compositional bias: basic and acidic residues; sequence KGKEPSKKKESAKPKRSEKVK.

It belongs to the archaeal DNA polymerase II family. In terms of assembly, heterodimer of a large subunit and a small subunit. Post-translationally, this protein undergoes a protein self splicing that involves a post-translational excision of the intervening region (intein) followed by peptide ligation.

The enzyme catalyses DNA(n) + a 2'-deoxyribonucleoside 5'-triphosphate = DNA(n+1) + diphosphate. It catalyses the reaction Exonucleolytic cleavage in the 3'- to 5'-direction to yield nucleoside 5'-phosphates.. Possesses two activities: a DNA synthesis (polymerase) and an exonucleolytic activity that degrades single-stranded DNA in the 3'- to 5'-direction. Has a template-primer preference which is characteristic of a replicative DNA polymerase. This is DNA polymerase II large subunit (polC) from Thermococcus kodakarensis (strain ATCC BAA-918 / JCM 12380 / KOD1) (Pyrococcus kodakaraensis (strain KOD1)).